The chain runs to 144 residues: Universal stress protein F (144 aa).

It belongs to the universal stress protein A family. As to quaternary structure, homodimer.

This Escherichia coli (strain K12) protein is Universal stress protein F (uspF).